A 148-amino-acid polypeptide reads, in one-letter code: Protein F15 (148 aa).

It belongs to the poxviridae F15 protein family.

This is Protein F15 from Fowlpox virus (strain NVSL) (FPV).